A 314-amino-acid chain; its full sequence is MKRAPTKQPAKPAARGGERAQGRVIAAHGRHYIVAPADGGPMLQCFPRGKKSEVAVGDRVAYERTSADQGVIVEIGERRNLLYRSDQFKSKLFAANLDQLLIVLATEPYFSEDLLGRALIAAEANELKPIVVLNKIDVEAALPVARERLAPYRALGYDVLELSVKGAPDDARAQLAPRLAGHSTILLGQSGMGKSTLVNLLVPDAEAATREISAALNSGRHTTTFTRLYPLQDGGALIDSPGFQEFGLYHLTEGRLERAFPEFRPLLAHCRFYNCHHLHEPGCAILEALADGRIAPTRHALYAQLVHEASQIVR.

A disordered region spans residues 1–21 (MKRAPTKQPAKPAARGGERAQ). Positions 85–246 (SDQFKSKLFA…LIDSPGFQEF (162 aa)) constitute a CP-type G domain. GTP is bound by residues 134 to 137 (NKID) and 188 to 196 (GQSGMGKST). Zn(2+) contacts are provided by cysteine 270, cysteine 275, histidine 277, and cysteine 283.

Belongs to the TRAFAC class YlqF/YawG GTPase family. RsgA subfamily. In terms of assembly, monomer. Associates with 30S ribosomal subunit, binds 16S rRNA. Zn(2+) is required as a cofactor.

It is found in the cytoplasm. In terms of biological role, one of several proteins that assist in the late maturation steps of the functional core of the 30S ribosomal subunit. Helps release RbfA from mature subunits. May play a role in the assembly of ribosomal proteins into the subunit. Circularly permuted GTPase that catalyzes slow GTP hydrolysis, GTPase activity is stimulated by the 30S ribosomal subunit. The protein is Small ribosomal subunit biogenesis GTPase RsgA of Burkholderia pseudomallei (strain 1106a).